Consider the following 404-residue polypeptide: MALRTIDSLGDLRGRRVIVRCDLNVPLKDGVIGDDGRIRASLGTLTGLREAGARVVVISHLGRPDGTPDDKYSLRPVAARLGELLGADVAFASDTVGDSARAAVEALGDGDVVVLENLRFHAEETSKDETVRRGFAESLAELGDVFVSDGFGVVHRKQASVFELASALPSAAGSLIASELEVLDRLTENPERPYTVVLGGSKVSDKLGVIGHLLPRVDSLLIGGGMLFTFLKAQGHEVGASLLEEDQVETVKGYLAEAEERGVKIVLPTDVVVADGFSADAAHEVTRADAIEGTPAGAKGLGLDIGPETADAFATIIRGSTTVFWNGPMGVFELEPFAAGTKTVADALTRVEGLSVVGGGDSAAAVRALGFDDDRFGHISTGGGASLEFLEGKRLPGLEVLGWQ.

Substrate contacts are provided by residues 22–24 (DLN), R37, 60–63 (HLGR), R119, and R156. Residues K206, G302, E333, and 359–362 (GGDS) each bind ATP.

The protein belongs to the phosphoglycerate kinase family. Monomer.

Its subcellular location is the cytoplasm. It catalyses the reaction (2R)-3-phosphoglycerate + ATP = (2R)-3-phospho-glyceroyl phosphate + ADP. Its pathway is carbohydrate degradation; glycolysis; pyruvate from D-glyceraldehyde 3-phosphate: step 2/5. The protein is Phosphoglycerate kinase of Clavibacter michiganensis subsp. michiganensis (strain NCPPB 382).